A 475-amino-acid chain; its full sequence is Putative aldehyde dehydrogenase SH0913 (475 aa).

Residue 201–207 participates in NAD(+) binding; the sequence is GDGEGVG. Residues Glu245 and Cys279 contribute to the active site.

This sequence belongs to the aldehyde dehydrogenase family.

The catalysed reaction is an aldehyde + NAD(+) + H2O = a carboxylate + NADH + 2 H(+). The polypeptide is Putative aldehyde dehydrogenase SH0913 (Staphylococcus haemolyticus (strain JCSC1435)).